A 116-amino-acid chain; its full sequence is Large ribosomal subunit protein bL20c (116 aa).

This sequence belongs to the bacterial ribosomal protein bL20 family.

It localises to the plastid. Its subcellular location is the chloroplast. Functionally, binds directly to 23S ribosomal RNA and is necessary for the in vitro assembly process of the 50S ribosomal subunit. It is not involved in the protein synthesizing functions of that subunit. This Cryptomeria japonica (Japanese cedar) protein is Large ribosomal subunit protein bL20c.